Consider the following 89-residue polypeptide: Small ribosomal subunit protein uS15 (89 aa).

The protein belongs to the universal ribosomal protein uS15 family. As to quaternary structure, part of the 30S ribosomal subunit. Forms a bridge to the 50S subunit in the 70S ribosome, contacting the 23S rRNA.

One of the primary rRNA binding proteins, it binds directly to 16S rRNA where it helps nucleate assembly of the platform of the 30S subunit by binding and bridging several RNA helices of the 16S rRNA. Its function is as follows. Forms an intersubunit bridge (bridge B4) with the 23S rRNA of the 50S subunit in the ribosome. The chain is Small ribosomal subunit protein uS15 from Shewanella frigidimarina (strain NCIMB 400).